Reading from the N-terminus, the 319-residue chain is Malate dehydrogenase (319 aa).

NAD(+) is bound by residues 10–15 (GAGNIG) and aspartate 34. Residues arginine 83 and arginine 89 each coordinate substrate. NAD(+) is bound by residues asparagine 96 and 119-121 (ITN). Residues asparagine 121 and arginine 152 each contribute to the substrate site. Histidine 176 serves as the catalytic Proton acceptor.

It belongs to the LDH/MDH superfamily. MDH type 3 family.

It carries out the reaction (S)-malate + NAD(+) = oxaloacetate + NADH + H(+). Its function is as follows. Catalyzes the reversible oxidation of malate to oxaloacetate. The sequence is that of Malate dehydrogenase from Francisella tularensis subsp. tularensis (strain FSC 198).